A 438-amino-acid polypeptide reads, in one-letter code: Probable phosphoglucosamine mutase (438 aa).

The active-site Phosphoserine intermediate is the Ser-91. Positions 91, 228, 230, and 232 each coordinate Mg(2+). The residue at position 91 (Ser-91) is a Phosphoserine.

Belongs to the phosphohexose mutase family. Mg(2+) serves as cofactor. Post-translationally, activated by phosphorylation.

The catalysed reaction is alpha-D-glucosamine 1-phosphate = D-glucosamine 6-phosphate. Its function is as follows. Catalyzes the conversion of glucosamine-6-phosphate to glucosamine-1-phosphate. The polypeptide is Probable phosphoglucosamine mutase (Methanocella arvoryzae (strain DSM 22066 / NBRC 105507 / MRE50)).